A 465-amino-acid chain; its full sequence is ATP-dependent rRNA helicase rrp3 (465 aa).

The disordered stretch occupies residues 1–46 (MSALKKRKITEKQPETNSDSEAESVSSRGSAKDETQTSGEEPAPAK). Over residues 15–29 (ETNSDSEAESVSSRG) the composition is skewed to polar residues. Residues 46–74 (KSFKELGIIDQLCEACENMGYKAPTPIQS) carry the Q motif motif. The 172-residue stretch at 77-248 (IPLALEGRDV…RASLSNPVRV (172 aa)) folds into the Helicase ATP-binding domain. Residue 90–97 (AETGSGKT) participates in ATP binding. Positions 196-199 (DEAD) match the DEAD box motif. Residues 275 to 419 (YLVYLLNEFA…EYQVEKDEVM (145 aa)) enclose the Helicase C-terminal domain. The segment at 436-465 (MKSFDEKKGARGKKFGKGKRSRDDMDQEEG) is disordered. Over residues 445–455 (ARGKKFGKGKR) the composition is skewed to basic residues.

The protein belongs to the DEAD box helicase family. DDX47/RRP3 subfamily. Interacts with the SSU processome.

It localises to the nucleus. The catalysed reaction is ATP + H2O = ADP + phosphate + H(+). ATP-dependent rRNA helicase required for pre-ribosomal RNA processing. Involved in the maturation of the 35S-pre-rRNA and to its cleavage to mature 18S rRNA. In Emericella nidulans (strain FGSC A4 / ATCC 38163 / CBS 112.46 / NRRL 194 / M139) (Aspergillus nidulans), this protein is ATP-dependent rRNA helicase rrp3.